The following is a 465-amino-acid chain: MSYIQILPETFSIISSLVLLLLGIVFNRRTINLLALGCTVITLIILILSAKDSGFFPFNSLLKLDLYIRSAQGLILIAGILVLLLLNLSKYDYEYEFSILILFTLFGMITLVSANNLISFYLSFELMSIPLYVLASFNKDSVYSCEAGVKYFTLSALSSCIMLYGMSLLYGYTGLVNFSELSSFLENHQMTYGIVFGLVLILIGLCFKLAIAPFHMWAPDVYQGAPTIVTAFFSTVPKAALVTFLIRFFMGEELVGVEKYFQPVLLYISALSVLISAFGALRQRNLKRLLAYSSIGHIGFILASLSIFTRMGTDSSLIYLVIYIITNIGLFSYFIQIDDDDCSVANLSGIGKKRPVLAFHLSILLFSMAGIPPLAGFFAKLFIFKSLVNSGFIGMSLIFIVASVISCYYYLSIIKAMYFDKPSDSKVIYSKSLFIVTSVASLINIVLFMCVEDLYSLIHLVTKSL.

13 helical membrane-spanning segments follow: residues 6–26, 30–50, 66–86, 98–118, 156–176, 194–214, 226–246, 261–281, 289–309, 317–337, 363–383, 391–411, and 432–452; these read ILPE…GIVF, TINL…ILSA, LYIR…LLLL, SILI…NNLI, ALSS…TGLV, IVFG…IAPF, PTIV…TFLI, FQPV…FGAL, LLAY…SIFT, LIYL…FIQI, ILLF…KLFI, GFIG…YYYL, and SLFI…MCVE.

Belongs to the complex I subunit 2 family. As to quaternary structure, NDH-1 is composed of 14 different subunits. Subunits NuoA, H, J, K, L, M, N constitute the membrane sector of the complex.

It localises to the cell membrane. The enzyme catalyses a quinone + NADH + 5 H(+)(in) = a quinol + NAD(+) + 4 H(+)(out). Functionally, NDH-1 shuttles electrons from NADH, via FMN and iron-sulfur (Fe-S) centers, to quinones in the respiratory chain. The immediate electron acceptor for the enzyme in this species is believed to be ubiquinone. Couples the redox reaction to proton translocation (for every two electrons transferred, four hydrogen ions are translocated across the cytoplasmic membrane), and thus conserves the redox energy in a proton gradient. The polypeptide is NADH-quinone oxidoreductase subunit N (Wolbachia sp. subsp. Brugia malayi (strain TRS)).